The chain runs to 171 residues: Synaptonemal complex central element protein 2 (171 aa).

Residues 1–52 (MERHGVAAPPVELKDQEPPAIVESGEHRQSENHEETPGSVAPSASCQLPGPF) are disordered. Over residues 24–36 (SGEHRQSENHEET) the composition is skewed to basic and acidic residues. Coiled coils occupy residues 52–83 (FSSLDSSIETLKKKAQELIENINESRQKDHAL) and 118–146 (QERLQEFTQKMAKINHLEMELKQVCQTVE).

Belongs to the SYCE family. Homodimer. Found in a complex with SYCP1 and SYCE1. Interacts with SYCP1 and SYCE1. Interacts with SYCE3. Interacts with TEX12. As to expression, meiotic cells (at protein level). Expressed in the ovary and testis.

The protein localises to the nucleus. Its subcellular location is the chromosome. Its function is as follows. Major component of the transverse central element of synaptonemal complexes (SCS), formed between homologous chromosomes during meiotic prophase. Requires SYCP1 in order to be incorporated into the central element. May have a role in the synaptonemal complex assembly, stabilization and recombination. In Mus musculus (Mouse), this protein is Synaptonemal complex central element protein 2 (Syce2).